The sequence spans 262 residues: Outer membrane protein assembly factor BamD (262 aa).

The first 18 residues, 1-18 (MRKIKSLALLAVAALVIG), serve as a signal peptide directing secretion. Residue Cys19 is the site of N-palmitoyl cysteine attachment. Cys19 carries the S-diacylglycerol cysteine lipid modification.

The protein belongs to the BamD family. As to quaternary structure, part of the Bam complex.

The protein resides in the cell outer membrane. In terms of biological role, part of the outer membrane protein assembly complex, which is involved in assembly and insertion of beta-barrel proteins into the outer membrane. In Haemophilus influenzae (strain ATCC 51907 / DSM 11121 / KW20 / Rd), this protein is Outer membrane protein assembly factor BamD.